Consider the following 877-residue polypeptide: Alanine--tRNA ligase (877 aa).

Zn(2+)-binding residues include histidine 565, histidine 569, cysteine 667, and histidine 671.

It belongs to the class-II aminoacyl-tRNA synthetase family. The cofactor is Zn(2+).

It is found in the cytoplasm. It catalyses the reaction tRNA(Ala) + L-alanine + ATP = L-alanyl-tRNA(Ala) + AMP + diphosphate. Catalyzes the attachment of alanine to tRNA(Ala) in a two-step reaction: alanine is first activated by ATP to form Ala-AMP and then transferred to the acceptor end of tRNA(Ala). Also edits incorrectly charged Ser-tRNA(Ala) and Gly-tRNA(Ala) via its editing domain. The chain is Alanine--tRNA ligase from Acidithiobacillus ferridurans.